The chain runs to 178 residues: Large ribosomal subunit protein bL17 (178 aa).

The protein belongs to the bacterial ribosomal protein bL17 family. As to quaternary structure, part of the 50S ribosomal subunit. Contacts protein L32.

This is Large ribosomal subunit protein bL17 from Lachnospira eligens (strain ATCC 27750 / DSM 3376 / VPI C15-48 / C15-B4) (Eubacterium eligens).